The sequence spans 407 residues: 5-aminolevulinate synthase 1 (407 aa).

Substrate is bound by residues R21, S137, and K156. Pyridoxal 5'-phosphate is bound by residues S189, H217, and T245. K248 is an active-site residue. K248 is modified (N6-(pyridoxal phosphate)lysine). The pyridoxal 5'-phosphate site is built by S277 and T278. T363 contributes to the substrate binding site.

It belongs to the class-II pyridoxal-phosphate-dependent aminotransferase family. In terms of assembly, homodimer. Requires pyridoxal 5'-phosphate as cofactor.

It catalyses the reaction succinyl-CoA + glycine + H(+) = 5-aminolevulinate + CO2 + CoA. It participates in porphyrin-containing compound metabolism; protoporphyrin-IX biosynthesis; 5-aminolevulinate from glycine: step 1/1. The chain is 5-aminolevulinate synthase 1 (hemA) from Cereibacter sphaeroides (strain ATCC 17023 / DSM 158 / JCM 6121 / CCUG 31486 / LMG 2827 / NBRC 12203 / NCIMB 8253 / ATH 2.4.1.) (Rhodobacter sphaeroides).